The following is a 135-amino-acid chain: Mini-ribonuclease 3 (135 aa).

Asp19 is an active-site residue.

Belongs to the MrnC RNase family. As to quaternary structure, homodimer. The cofactor is Mg(2+).

It localises to the cytoplasm. Its function is as follows. Involved in correct processing of both the 5' and 3' ends of 23S rRNA precursor. Processes 30S rRNA precursor transcript even in absence of ribonuclease 3 (Rnc); Rnc processes 30S rRNA into smaller rRNA precursors. In Gloeobacter violaceus (strain ATCC 29082 / PCC 7421), this protein is Mini-ribonuclease 3.